The chain runs to 548 residues: Probable malate:quinone oxidoreductase (548 aa).

The disordered stretch occupies residues 521-548 (DKPQAADSTPKPQLKPQPVQKEVADIAL). Low complexity predominate over residues 530–541 (PKPQLKPQPVQK).

It belongs to the MQO family. Requires FAD as cofactor.

It catalyses the reaction (S)-malate + a quinone = a quinol + oxaloacetate. It participates in carbohydrate metabolism; tricarboxylic acid cycle; oxaloacetate from (S)-malate (quinone route): step 1/1. The polypeptide is Probable malate:quinone oxidoreductase (Shigella sonnei (strain Ss046)).